The following is a 2116-amino-acid chain: Myosin-2 heavy chain (2116 aa).

In terms of domain architecture, Myosin N-terminal SH3-like spans 30-82; that stretch reads SDKRYIWYNPDPKERDSYECGEIVSETSDSFTFKTVDGQDRQVKKDDANQRNP. Residues 86–759 form the Myosin motor domain; the sequence is DGVEDMSELS…QLARIEEARE (674 aa). Position 130 is an N6,N6-dimethyllysine (Lys130). 179 to 186 provides a ligand contact to ATP; the sequence is GESGAGKT. Actin-binding regions lie at residues 638–660 and 738–752; these read LASL…IPNN and RFGI…GQLA. Positions 762 to 791 constitute an IQ domain; the sequence is ISEIIKAIQAATRGWIARKVYKQAREHTVA. Residues 817–2116 are a coiled coil; it reads ARPLLKRRNF…MADFFGGFKA (1300 aa). 6 disordered regions span residues 1295–1314, 1363–1399, 1415–1444, 1711–1731, 1771–1791, and 1805–1844; these read VNEQ…KRKV, DKSV…SKKK, TAKK…DAKN, VRDQ…SKRR, LEDE…LESE, and NRSR…AAKL. 3 stretches are compositionally biased toward basic and acidic residues: residues 1375–1399, 1415–1443, and 1722–1731; these read KNEE…SKKK, TAKK…DDAK, and RSELEDSKRR. Over residues 1805–1832 the composition is skewed to basic and acidic residues; that stretch reads NRSRAEKDRKKYEKDLKDTKYKLNDEAA. Residues Thr1823, Thr1833, and Thr2029 each carry the phosphothreonine; by MHCK modification.

It belongs to the TRAFAC class myosin-kinesin ATPase superfamily. Myosin family. Myosin-2 heavy chain is two-headed. It self-assembles into filaments. Hexamer of 2 heavy chain subunits (MHC), 2 alkali light chain subunits (MLC) and 2 regulatory light chain subunits (MLC-2). Associates with elmoA. In terms of processing, phosphorylation inhibits thick filament formation and reduces the actin-activated ATPase activity.

Its subcellular location is the cytoplasm. The protein resides in the cell cortex. Functionally, myosin is a protein that binds to actin and has ATPase activity that is activated by actin. The sequence is that of Myosin-2 heavy chain (mhcA) from Dictyostelium discoideum (Social amoeba).